The sequence spans 884 residues: Probable mixed-linked glucan synthase 9 (884 aa).

Residues 1-27 are compositionally biased toward low complexity; it reads MALSPAAAGRTGRNNNNDAGLADPLLP. A disordered region spans residues 1–34; sequence MALSPAAAGRTGRNNNNDAGLADPLLPAGGGGGG. 2 helical membrane-spanning segments follow: residues 73-93 and 104-124; these read VLLH…VLFL and AMWL…TWLL. The active site involves D195. Substrate is bound by residues D396 and D398. Residue D565 is part of the active site. A run of 6 helical transmembrane segments spans residues 640–660, 672–692, 708–728, 765–785, 802–822, and 830–850; these read TAYP…VIWL, FSTY…IGLV, EQFY…HIVL, LLAP…AAAG, AGLV…LGIM, and CALF…FVAV.

The protein belongs to the glycosyltransferase 2 family. Plant cellulose synthase-like F subfamily.

It localises to the golgi apparatus membrane. Functionally, may catalyze both beta-1,3 and beta-1,4 glycosidic linkage on beta-D-glucan. Essential for (1,3;1,4)-beta-D-glucans synthesis in grasses and cereals (Poaceae). The mixed-linked glucans (which are not present in walls of dicotyledons or most other monocotyledonous plants) are particularly important constituents of the walls of the starchy endosperm and aleurone cells of cereal grains such as oats, wheat, rice and barley. They can account for up to 70% by weight of the wall. This Oryza sativa subsp. japonica (Rice) protein is Probable mixed-linked glucan synthase 9 (CSLF9).